The chain runs to 396 residues: MTGRLFTSESVTEGHPDKIADQISDSVLDAMLELDPTSRVAVETLLTTGVVVVAGEVTTTGYVDVKDVVRRRIIEIGYDSSVKGFDGHSCGVMVAIGGQSGDIAQGVDTGHESRTGSVDAMDKQGAGDQGLMFGYACDDTDVLMPLPIVIAQRLAEQLTAVRKDGTLPYLRPDGKTQVTIEYDAENRPVRVDTVVLSSQHDEDTELDTLEADVKKHVIDPVLATFPIPSEGYRLLVNPTGRFVVGGPMGDAGLTGRKIIVDTYGGMARHGGGAFSGKDPSKVDRSAAYAMRWVAKNVVAAGLATRCEAQVAYAIGKAQPVGVFVETFGTGVVDDERIQEAVLEVFDLRPAAIIRDLDLLRPIYAKTAAYGHFGRELPEFTWERTDRADALRAAAGL.

His-15 is an ATP binding site. Asp-17 contacts Mg(2+). Glu-43 is a binding site for K(+). L-methionine is bound by residues Glu-56 and Gln-99. The interval Gln-99 to Thr-109 is flexible loop. ATP-binding positions include Asp-173–Lys-175, Arg-241–Phe-242, Asp-250, Arg-256–Lys-257, Ala-273, and Lys-277. Asp-250 is an L-methionine binding site. An L-methionine-binding site is contributed by Lys-281.

Belongs to the AdoMet synthase family. As to quaternary structure, homotetramer; dimer of dimers. The cofactor is Mg(2+). K(+) is required as a cofactor.

Its subcellular location is the cytoplasm. The enzyme catalyses L-methionine + ATP + H2O = S-adenosyl-L-methionine + phosphate + diphosphate. Its pathway is amino-acid biosynthesis; S-adenosyl-L-methionine biosynthesis; S-adenosyl-L-methionine from L-methionine: step 1/1. Functionally, catalyzes the formation of S-adenosylmethionine (AdoMet) from methionine and ATP. The overall synthetic reaction is composed of two sequential steps, AdoMet formation and the subsequent tripolyphosphate hydrolysis which occurs prior to release of AdoMet from the enzyme. This chain is S-adenosylmethionine synthase, found in Nocardioides sp. (strain ATCC BAA-499 / JS614).